Here is a 469-residue protein sequence, read N- to C-terminus: Tetratricopeptide repeat protein 38 (469 aa).

3 TPR repeats span residues 107 to 140 (REKL…HPTD), 179 to 212 (SYVK…ERTD), and 251 to 284 (CHVY…QCFA).

It belongs to the TTC38 family.

This chain is Tetratricopeptide repeat protein 38 (ttc38), found in Xenopus laevis (African clawed frog).